The chain runs to 425 residues: Serine--tRNA ligase (425 aa).

Residue 232–234 participates in L-serine binding; that stretch reads TSE. Residues 263–265 and valine 279 contribute to the ATP site; that span reads RRE. Glutamate 286 is an L-serine binding site. 350 to 353 serves as a coordination point for ATP; sequence EAVS. Residue threonine 387 participates in L-serine binding.

The protein belongs to the class-II aminoacyl-tRNA synthetase family. Type-1 seryl-tRNA synthetase subfamily. In terms of assembly, homodimer. The tRNA molecule binds across the dimer.

It is found in the cytoplasm. It carries out the reaction tRNA(Ser) + L-serine + ATP = L-seryl-tRNA(Ser) + AMP + diphosphate + H(+). The enzyme catalyses tRNA(Sec) + L-serine + ATP = L-seryl-tRNA(Sec) + AMP + diphosphate + H(+). The protein operates within aminoacyl-tRNA biosynthesis; selenocysteinyl-tRNA(Sec) biosynthesis; L-seryl-tRNA(Sec) from L-serine and tRNA(Sec): step 1/1. Its function is as follows. Catalyzes the attachment of serine to tRNA(Ser). Is also able to aminoacylate tRNA(Sec) with serine, to form the misacylated tRNA L-seryl-tRNA(Sec), which will be further converted into selenocysteinyl-tRNA(Sec). The polypeptide is Serine--tRNA ligase (Methanoculleus marisnigri (strain ATCC 35101 / DSM 1498 / JR1)).